The sequence spans 894 residues: Microsomal triglyceride transfer protein large subunit (894 aa).

Residues 1 to 18 (MILLAVLFLCFISSYSAS) form the signal peptide. The Vitellogenin domain occupies 28-659 (LNNDRLYKLT…IFQYIGKAGL (632 aa)). Cys174 and Cys194 form a disulfide bridge.

As to quaternary structure, heterodimer; heterodimerizes with the protein disulfide isomerase (P4HB/PDI). Interacts with APOB. Interacts with PRAP1. As to expression, liver and small intestine. Also found in ovary, testis and kidney.

The protein resides in the endoplasmic reticulum. The protein localises to the golgi apparatus. It carries out the reaction a 1,2-diacyl-sn-glycero-3-phosphocholine(in) = a 1,2-diacyl-sn-glycero-3-phosphocholine(out). The catalysed reaction is a 1,2-diacyl-sn-glycero-3-phosphoethanolamine(in) = a 1,2-diacyl-sn-glycero-3-phosphoethanolamine(out). It catalyses the reaction a cholesterol ester(in) = a cholesterol ester(out). The enzyme catalyses a triacyl-sn-glycerol(in) = a triacyl-sn-glycerol(out). Functionally, catalyzes the transport of triglyceride, cholesteryl ester, and phospholipid between phospholipid surfaces. Required for the assembly and secretion of plasma lipoproteins that contain apolipoprotein B. May be involved in regulating cholesteryl ester biosynthesis in cells that produce lipoproteins. The sequence is that of Microsomal triglyceride transfer protein large subunit (MTTP) from Homo sapiens (Human).